We begin with the raw amino-acid sequence, 258 residues long: Regulatory protein RecX (258 aa).

The protein belongs to the RecX family.

The protein localises to the cytoplasm. Its function is as follows. Modulates RecA activity. This Streptococcus pyogenes serotype M5 (strain Manfredo) protein is Regulatory protein RecX.